The primary structure comprises 305 residues: Probable xyloglucan endotransglucosylase/hydrolase protein 8 (305 aa).

A signal peptide spans 1–31 (METERRIITSCSAMTALFLFMTALMASSSIA). A GH16 domain is found at 32-231 (ATPTQSFEDN…WKKAPFVSSY (200 aa)). N-linked (GlcNAc...) asparagine glycosylation is found at asparagine 61 and asparagine 66. The active-site Nucleophile is the glutamate 115. Residue glutamate 119 is the Proton donor of the active site. Glutamate 119 is a binding site for xyloglucan. Residue asparagine 123 is glycosylated (N-linked (GlcNAc...) asparagine). Position 132-134 (132-134 (QTN)) interacts with xyloglucan. Asparagine 138 is a glycosylation site (N-linked (GlcNAc...) asparagine). Residues 142-144 (NRE), 210-211 (DW), and glycine 215 each bind xyloglucan. Cystine bridges form between cysteine 239–cysteine 248 and cysteine 286–cysteine 299. A xyloglucan-binding site is contributed by arginine 291.

The protein belongs to the glycosyl hydrolase 16 family. XTH group 1 subfamily. Post-translationally, contains at least one intrachain disulfide bond essential for its enzymatic activity.

Its subcellular location is the secreted. The protein localises to the cell wall. It localises to the extracellular space. The protein resides in the apoplast. It carries out the reaction breaks a beta-(1-&gt;4) bond in the backbone of a xyloglucan and transfers the xyloglucanyl segment on to O-4 of the non-reducing terminal glucose residue of an acceptor, which can be a xyloglucan or an oligosaccharide of xyloglucan.. Functionally, catalyzes xyloglucan endohydrolysis (XEH) and/or endotransglycosylation (XET). Cleaves and religates xyloglucan polymers, an essential constituent of the primary cell wall, and thereby participates in cell wall construction of growing tissues. The protein is Probable xyloglucan endotransglucosylase/hydrolase protein 8 (XTH8) of Arabidopsis thaliana (Mouse-ear cress).